Here is a 437-residue protein sequence, read N- to C-terminus: Methylenetetrahydrofolate--tRNA-(uracil-5-)-methyltransferase TrmFO (437 aa).

Position 10–15 (10–15) interacts with FAD; the sequence is GAGLAG.

It belongs to the MnmG family. TrmFO subfamily. Requires FAD as cofactor.

The protein resides in the cytoplasm. The enzyme catalyses uridine(54) in tRNA + (6R)-5,10-methylene-5,6,7,8-tetrahydrofolate + NADH + H(+) = 5-methyluridine(54) in tRNA + (6S)-5,6,7,8-tetrahydrofolate + NAD(+). It catalyses the reaction uridine(54) in tRNA + (6R)-5,10-methylene-5,6,7,8-tetrahydrofolate + NADPH + H(+) = 5-methyluridine(54) in tRNA + (6S)-5,6,7,8-tetrahydrofolate + NADP(+). Catalyzes the folate-dependent formation of 5-methyl-uridine at position 54 (M-5-U54) in all tRNAs. The polypeptide is Methylenetetrahydrofolate--tRNA-(uracil-5-)-methyltransferase TrmFO (Lysinibacillus sphaericus (strain C3-41)).